The primary structure comprises 249 residues: Protein-lysine 6-oxidase (249 aa).

The residue at position 19 (Tyr-19) is a Sulfotyrosine. The segment at 45 to 249 (PDLVPDPYYI…YASGCTISPY (205 aa)) is lysyl-oxidase like. 5 disulfide bridges follow: Cys-70–Cys-76, Cys-123–Cys-172, Cys-156–Cys-162, Cys-183–Cys-193, and Cys-230–Cys-244. His-124, His-126, and His-128 together coordinate Cu cation. The segment at residues 152–187 (KASFCLEDTSCDYGYHRRFACTAHTQGLSPGCYDTY) is a cross-link (lysine tyrosylquinone (Lys-Tyr)). Position 187 is a 2',4',5'-topaquinone (Tyr-187).

It belongs to the lysyl oxidase family. As to quaternary structure, interacts with MFAP4. Interacts (via propeptide) with EFEMP2; this interaction is strong and facilitates formation of ternary complexes with ELN during elastic fiber assembly; this interaction limits interaction of EFEMP2 with FBLN5. The cofactor is Cu cation. It depends on lysine tyrosylquinone residue as a cofactor. Post-translationally, the lysine tyrosylquinone cross-link (LTQ) is generated by condensation of the epsilon-amino group of a lysine with a topaquinone produced by oxidation of tyrosine. Proteolytically cleaved by BMP1 which removes the propeptide. Also proteolytically cleaved by ADAMTS2 and ADAMTS14, but not by ADAMTS3, at an additional cleavage site downstream of the BMP1 cleavage site. The propeptide plays a role in directing the deposition of this enzyme to elastic fibers, via interaction with tropoelastin. Cleavage by BMP1 to remove the propeptide does not increase enzymatic activity but increases binding to collagen. Cleavage by ADAMTS2 produces a form with reduced collagen-binding activity. In terms of processing, sulfated at Tyr-19 and also at either Tyr-15 or Tyr-16 which enhances binding to collagen.

It localises to the secreted. It is found in the extracellular space. The catalysed reaction is L-lysyl-[protein] + O2 + H2O = (S)-2-amino-6-oxohexanoyl-[protein] + H2O2 + NH4(+). Functionally, responsible for the post-translational oxidative deamination of peptidyl lysine residues in precursors to fibrous collagen and elastin. Regulator of Ras expression. May play a role in tumor suppression. Plays a role in the aortic wall architecture. This is Protein-lysine 6-oxidase from Sus scrofa (Pig).